Here is a 78-residue protein sequence, read N- to C-terminus: UPF0349 protein YuzB (78 aa).

It belongs to the UPF0349 family.

The chain is UPF0349 protein YuzB (yuzB) from Bacillus subtilis (strain 168).